The following is a 301-amino-acid chain: MKVETMNWISEVVRPRIKTLFKRETPENLWVKCPETGQMVFHKEVEANDYVIPGSEHHLRMTAQQRLKMMFDQGTWLDVPLPEVPVDPLKFRDEKRYVDRLKDARAKTGMMDAFKVGFGRVGGLPMTLAVQDFGFMGGSLGMAAGEAFVRGAETALDKRTPYVLFAASGGARMQEGILSLMQMPRTTVAVRRLNQARLPYLVVMTNPTTGGVTASYAMLGDIHLAEPGALIGFAGPRVIEQTIREKLPDGFQRSEYLREHGMIDQVVHRRDLKATIARLCGLLMQAPAAEPAEEEAEPLPA.

The 270-residue stretch at 29-298 (LWVKCPETGQ…AEPAEEEAEP (270 aa)) folds into the CoA carboxyltransferase N-terminal domain.

Belongs to the AccD/PCCB family. In terms of assembly, acetyl-CoA carboxylase is a heterohexamer composed of biotin carboxyl carrier protein (AccB), biotin carboxylase (AccC) and two subunits each of ACCase subunit alpha (AccA) and ACCase subunit beta (AccD).

The protein resides in the cytoplasm. The enzyme catalyses N(6)-carboxybiotinyl-L-lysyl-[protein] + acetyl-CoA = N(6)-biotinyl-L-lysyl-[protein] + malonyl-CoA. The protein operates within lipid metabolism; malonyl-CoA biosynthesis; malonyl-CoA from acetyl-CoA: step 1/1. Component of the acetyl coenzyme A carboxylase (ACC) complex. Biotin carboxylase (BC) catalyzes the carboxylation of biotin on its carrier protein (BCCP) and then the CO(2) group is transferred by the transcarboxylase to acetyl-CoA to form malonyl-CoA. This Methylobacterium nodulans (strain LMG 21967 / CNCM I-2342 / ORS 2060) protein is Acetyl-coenzyme A carboxylase carboxyl transferase subunit beta.